We begin with the raw amino-acid sequence, 279 residues long: Probable cyclic nucleotide phosphodiesterase Psyc_2036 (279 aa).

The Fe cation site is built by aspartate 23, histidine 25, aspartate 70, asparagine 100, histidine 179, histidine 218, and histidine 220. Residues histidine 25, aspartate 70, and 100–101 each bind AMP; that span reads NH. Histidine 220 contributes to the AMP binding site.

This sequence belongs to the cyclic nucleotide phosphodiesterase class-III family. It depends on Fe(2+) as a cofactor.

The chain is Probable cyclic nucleotide phosphodiesterase Psyc_2036 from Psychrobacter arcticus (strain DSM 17307 / VKM B-2377 / 273-4).